A 125-amino-acid chain; its full sequence is MLKEFKEFIARGNVMDLAVGVIIGAAFTAIVKSLVSNLINPLIGIFLGKIDLSNLVFSIGSAHFRYGSFLNEVINFLIIAFVVFLMVKGINKVMPKKEEEAVKEGPSKEEEYLGQIVELLKKQDK.

3 consecutive transmembrane segments (helical) span residues 19–39 (VGVIIGAAFTAIVKSLVSNLI), 42–62 (LIGIFLGKIDLSNLVFSIGSA), and 67–87 (GSFLNEVINFLIIAFVVFLMV).

The protein belongs to the MscL family. As to quaternary structure, homopentamer.

Its subcellular location is the cell membrane. Functionally, channel that opens in response to stretch forces in the membrane lipid bilayer. May participate in the regulation of osmotic pressure changes within the cell. The sequence is that of Large-conductance mechanosensitive channel from Limosilactobacillus fermentum (strain NBRC 3956 / LMG 18251) (Lactobacillus fermentum).